The primary structure comprises 255 residues: Cytochrome b561 and DOMON domain-containing protein At5g48750 (255 aa).

Positions 1–27 are cleaved as a signal peptide; sequence MFLSSRTIFVGLCFLFVLAPCFTRATT. The 116-residue stretch at 54–169 folds into the DOMON domain; sequence LDSFLHYSYV…TVVNHLWQDG (116 aa). In terms of domain architecture, Cytochrome b561 spans 176 to 255; it reads RLGMHAMSGN…DPTWFYILIL (80 aa). Residues 216–236 form a helical membrane-spanning segment; sequence IHGLVNAVCWGIFIPIGVMAA.

It is found in the membrane. The chain is Cytochrome b561 and DOMON domain-containing protein At5g48750 from Arabidopsis thaliana (Mouse-ear cress).